A 1740-amino-acid polypeptide reads, in one-letter code: MPSETIDSTKQFEFQISDWNSYHELDQEEEEKYVIQLFGRTEDDHDVCLKVTGYTPFFYVEIPKQWKQRQVDKFVEILKNKVQYHCKKNLDEDFDLSKSLIKYAMVKKHKFYNFRNKQLYNFLLLVFKSHTAMKEFSSILARPLEAKGLTNKPMLYQRYESNIEPHIRFMHINNLSSCGWASIDKDKLKKIPEYSNCDYSFSVNWKDVKPSNNDDRMAPFKIMGYDIECVSCDQNFPQAERPSDKIIQIGITMYRYGSMKCYEQHILTLKKCAPIEGVNVECYKKEKGLLRGFAKKIAELRPDFKTGYNNFGFDDKYIYDRILRIDKREGKKQGVNINALKNKFMDEILRTIGKVNNNYLIENEGLDRIPIYTTVKDKKISSKASRFIQIRGGTYVENGNNLKYVQSPGITYFEVKNLSSSALGDNELKFIQIPGVLSIDMMKVIQRDHRLIGYKLDNVSANFITEKADKIIEMPHNQEDSDSEKEDEDTDDKTYDVNIYTKSTKALEKDSYIQIMVNDGYSSSPLSEGAKYKVYDIQTITEKKLNEKTNKEEIFVYQAIKTKICQKDIQQLRETIKNPLLGISWTFAKDDMHHTKINEYFEEGDPKKIRQIAKYCLKDCKLVNLLLAKLEIIVNSVGMAKVCHVPLSYLFLRGQGVKIFSLVSKKCREKNFLIPVLRRKSKDNEGDEDETYEGATVITPKPNVYLSPIGVLDYSSLYPNSMRERNLSQECYVDDSKYDNLPGYIYHDVEIILKDKKGKILRNIDGTPQKEYHRFAQEIITDEQINRELKDIFDKINTVFENNVAIIQNQKYFTEKNISELIDKHKNISDSKIEDIEFDESLSDKRKNKLVDAEKDSLDKNIGFYQKIKSQIDKIKLDSKIEIDNLSKNLNEEEKSKQINKMELNTKNLISKVFSKYLITEQQREELIVLEKERAKRSVNAEKAKVYNTVDGITVRYGILPEILTELLNKRKETNGKLANEKDPFVKAILNALQLAFKVTANSLYGQTGAPTSPLYFIAIAACTTAIGRERLHYAKKTVEDNFPGSEVIYGDSVTGDTPIITRHQNGDINITTIEELGSKWKPYEIFKAHEKNSNRKFKQQSQYPTDSEVWTAKGWAKIKRVIRHKTVKKIYRVLTHTGCIDVTEDHSLLDPNQNIIKPINCQIGTELLHGFPESNNVYDNISEQEAYVWGFFMGDGSCGSYQTKNGIKYSWALNNQDLDVLNKCKKYLEETENIQFKILDTMKSSSVYKLVPIRKIKYMVNKYRKIFYDNKKYKLVPKEILNSTKDIKNSFLEGYYAADGSRKETENMGCRRCDIKGKISAQCLFYLLKSLGYNVSINIRSDKNQIYRLTFSNKKQRKNPIAIKKIQLMNETSNDHDGDYVYDLETESGSFHAGVGEMIVKNTDSIFINFHIKDENGEEKTDKEALMKTIAKCQRAAKLINQNVPKPQSIVYEKTLHPFILVAKKKYVGLLFEKSPDKYFLKSMGIVLKRRDNAPIVKIVVGGIIDNILKNRDIDKAIEYTKIVLDKLMNGEYPMDKFIISKTLKSRYKKPSTIAHKVLADRMAVRDPGNKPQINDRIPFVYIVKDMGKKKKKDILQGDLIEHPEYVIANNLKIDYLYYLEHQIINPASQILELMMDTKDVQKFFNKYIIDEQNKRKGAQSLTKWMDFSKLPKESGSKTAKKPYQSQKLQKTKSSNKSQIDPKYINLIKNKSRKHECQNMNKWISSTDKCTDDWEPIVE.

Residues 472 to 491 (IEMPHNQEDSDSEKEDEDTD) are disordered. Over residues 480-491 (DSDSEKEDEDTD) the composition is skewed to acidic residues. The DOD-type homing endonuclease domain maps to 1189-1334 (VWGFFMGDGS…LFYLLKSLGY (146 aa)). Residues 1673 to 1701 (PKESGSKTAKKPYQSQKLQKTKSSNKSQI) are disordered. Residues 1685–1700 (YQSQKLQKTKSSNKSQ) are compositionally biased toward polar residues.

This sequence belongs to the DNA polymerase type-B family. This protein undergoes a protein self splicing that involves a post-translational excision of the intervening region (intein) followed by peptide ligation.

It catalyses the reaction DNA(n) + a 2'-deoxyribonucleoside 5'-triphosphate = DNA(n+1) + diphosphate. This is DNA polymerase (POLB) from Acanthamoeba polyphaga (Amoeba).